Reading from the N-terminus, the 289-residue chain is tRNA U34 carboxymethyltransferase (289 aa).

Carboxy-S-adenosyl-L-methionine-binding positions include Lys60, Trp74, Lys79, Gly98, 120-122 (DPS), 147-148 (VE), Tyr167, and Arg282.

This sequence belongs to the class I-like SAM-binding methyltransferase superfamily. CmoB family. In terms of assembly, homotetramer.

It carries out the reaction carboxy-S-adenosyl-L-methionine + 5-hydroxyuridine(34) in tRNA = 5-carboxymethoxyuridine(34) in tRNA + S-adenosyl-L-homocysteine + H(+). Catalyzes carboxymethyl transfer from carboxy-S-adenosyl-L-methionine (Cx-SAM) to 5-hydroxyuridine (ho5U) to form 5-carboxymethoxyuridine (cmo5U) at position 34 in tRNAs. This chain is tRNA U34 carboxymethyltransferase, found in Campylobacter concisus (strain 13826).